Reading from the N-terminus, the 321-residue chain is Protein OPG049 (321 aa).

The N-terminal stretch at 1 to 20 is a signal peptide; it reads MGTNGVRVFVILYLLAVCGC. Residues Asn36, Asn41, Asn72, Asn79, Asn108, Asn144, Asn220, and Asn245 are each glycosylated (N-linked (GlcNAc...) asparagine; by host). A helical transmembrane segment spans residues 286 to 306; that stretch reads LIMIVLITMLSIILVIIVVIA.

Belongs to the orthopoxvirus OPG049 family.

The protein localises to the host cell membrane. Its function is as follows. Plays a role in the spread of virus to neighboring cells ex vivo. The chain is Protein OPG049 (OPG049) from Homo sapiens (Human).